The sequence spans 156 residues: MQLLIVAVGHKMPRWIEDGFAEYAKRMPPELRIELREIKPEQRSGSRTAATVMQLEAARIEAALPKGCRIVALDERGKDLTTAALADALTGWQREGGDVALIIGGADGLDPALKARAHMLMRLSSLTLPHGMVRVLLAEQLYRAWSITQNHPYHRV.

Residues Leu73, Gly104, and 123-128 each bind S-adenosyl-L-methionine; that span reads LSSLTL.

Belongs to the RNA methyltransferase RlmH family. As to quaternary structure, homodimer.

It localises to the cytoplasm. It catalyses the reaction pseudouridine(1915) in 23S rRNA + S-adenosyl-L-methionine = N(3)-methylpseudouridine(1915) in 23S rRNA + S-adenosyl-L-homocysteine + H(+). In terms of biological role, specifically methylates the pseudouridine at position 1915 (m3Psi1915) in 23S rRNA. This Ralstonia nicotianae (strain ATCC BAA-1114 / GMI1000) (Ralstonia solanacearum) protein is Ribosomal RNA large subunit methyltransferase H.